The following is a 977-amino-acid chain: DNA-directed RNA polymerase 3A, chloroplastic (977 aa).

The transit peptide at 1 to 72 directs the protein to the chloroplast; that stretch reads MASTASYSPS…NNIQSQTTVC (72 aa). Catalysis depends on residues aspartate 678, lysine 753, and aspartate 910.

Belongs to the phage and mitochondrial RNA polymerase family.

The protein localises to the plastid. It localises to the chloroplast. It catalyses the reaction RNA(n) + a ribonucleoside 5'-triphosphate = RNA(n+1) + diphosphate. Functionally, DNA-dependent RNA polymerase catalyzes the transcription of DNA into RNA using the four ribonucleoside triphosphates as substrates. This chain is DNA-directed RNA polymerase 3A, chloroplastic (RPOT3-SYL), found in Nicotiana tabacum (Common tobacco).